Reading from the N-terminus, the 162-residue chain is AIMRMSGEGPTFDANTECAIAYHHTKYQVEQGTAQLYAGDDMAQDTTPILKPSFRLIADRIELKSKEVTHTQVPGEYATFCGWCVTPKGIIKEPRKLFASLQLAKHIGKTAEVKTNYAHDLAHAYRLGDELQDVLTPDEAAFHQATVRDLVTMGGVDFQWHP.

Belongs to the potexvirus/carlavirus RNA replication protein family.

It catalyses the reaction RNA(n) + a ribonucleoside 5'-triphosphate = RNA(n+1) + diphosphate. The catalysed reaction is ATP + H2O = ADP + phosphate + H(+). In terms of biological role, RNA replication. The central part of this protein possibly functions as an ATP-binding helicase. The polypeptide is RNA replication protein (Lilium formosanum).